Reading from the N-terminus, the 350-residue chain is Probable dual-specificity RNA methyltransferase RlmN (350 aa).

Glu98 acts as the Proton acceptor in catalysis. Positions 104–334 (HTYGNSVCVS…VTVRRELGGD (231 aa)) constitute a Radical SAM core domain. A disulfide bridge links Cys111 with Cys339. Residues Cys118, Cys122, and Cys125 each contribute to the [4Fe-4S] cluster site. S-adenosyl-L-methionine is bound by residues 165–166 (GE), Ser197, 220–222 (SLH), and Asn296. Cys339 (S-methylcysteine intermediate) is an active-site residue.

Belongs to the radical SAM superfamily. RlmN family. The cofactor is [4Fe-4S] cluster.

The protein resides in the cytoplasm. It carries out the reaction adenosine(2503) in 23S rRNA + 2 reduced [2Fe-2S]-[ferredoxin] + 2 S-adenosyl-L-methionine = 2-methyladenosine(2503) in 23S rRNA + 5'-deoxyadenosine + L-methionine + 2 oxidized [2Fe-2S]-[ferredoxin] + S-adenosyl-L-homocysteine. The enzyme catalyses adenosine(37) in tRNA + 2 reduced [2Fe-2S]-[ferredoxin] + 2 S-adenosyl-L-methionine = 2-methyladenosine(37) in tRNA + 5'-deoxyadenosine + L-methionine + 2 oxidized [2Fe-2S]-[ferredoxin] + S-adenosyl-L-homocysteine. In terms of biological role, specifically methylates position 2 of adenine 2503 in 23S rRNA and position 2 of adenine 37 in tRNAs. The protein is Probable dual-specificity RNA methyltransferase RlmN of Desulforamulus reducens (strain ATCC BAA-1160 / DSM 100696 / MI-1) (Desulfotomaculum reducens).